A 121-amino-acid chain; its full sequence is Large ribosomal subunit protein uL14 (121 aa).

Belongs to the universal ribosomal protein uL14 family. In terms of assembly, part of the 50S ribosomal subunit. Forms a cluster with proteins L3 and L19. In the 70S ribosome, L14 and L19 interact and together make contacts with the 16S rRNA in bridges B5 and B8.

Its function is as follows. Binds to 23S rRNA. Forms part of two intersubunit bridges in the 70S ribosome. The polypeptide is Large ribosomal subunit protein uL14 (Azobacteroides pseudotrichonymphae genomovar. CFP2).